The sequence spans 156 residues: Endoribonuclease YbeY (156 aa).

Zn(2+) is bound by residues histidine 117, histidine 121, and histidine 127.

It belongs to the endoribonuclease YbeY family. Zn(2+) serves as cofactor.

Its subcellular location is the cytoplasm. Functionally, single strand-specific metallo-endoribonuclease involved in late-stage 70S ribosome quality control and in maturation of the 3' terminus of the 16S rRNA. In Shewanella halifaxensis (strain HAW-EB4), this protein is Endoribonuclease YbeY.